The following is a 604-amino-acid chain: Aspartate--tRNA(Asp/Asn) ligase (604 aa).

Position 175 (Glu-175) interacts with L-aspartate. Positions 199–202 (QQFK) are aspartate. L-aspartate is bound by residues Arg-221 and His-456. 221 to 223 (RDE) serves as a coordination point for ATP. Glu-496 serves as a coordination point for ATP. Arg-503 is a binding site for L-aspartate. 548–551 (GVDR) lines the ATP pocket.

It belongs to the class-II aminoacyl-tRNA synthetase family. Type 1 subfamily. In terms of assembly, homodimer.

Its subcellular location is the cytoplasm. It carries out the reaction tRNA(Asx) + L-aspartate + ATP = L-aspartyl-tRNA(Asx) + AMP + diphosphate. Its function is as follows. Aspartyl-tRNA synthetase with relaxed tRNA specificity since it is able to aspartylate not only its cognate tRNA(Asp) but also tRNA(Asn). Reaction proceeds in two steps: L-aspartate is first activated by ATP to form Asp-AMP and then transferred to the acceptor end of tRNA(Asp/Asn). This Methylorubrum extorquens (strain CM4 / NCIMB 13688) (Methylobacterium extorquens) protein is Aspartate--tRNA(Asp/Asn) ligase.